The primary structure comprises 170 residues: CCHC-type zinc finger nucleic acid binding protein (170 aa).

Serine 2 is modified (N-acetylserine). A CCHC-type 1 zinc finger spans residues 4-21 (NECFKCGRSGHWARECPT). An N6-acetyllysine modification is found at lysine 8. An omega-N-methylarginine; by PRMT1 mark is found at arginine 25 and arginine 27. An RNA-binding Arg/Gly-rich region (RGG-box) region spans residues 25-33 (RGRGMRSRG). Position 42 is a phosphoserine (serine 42). CCHC-type zinc fingers lie at residues 45 to 62 (DICY…DCDL), 65 to 82 (DACY…DCKE), 89 to 106 (QCCY…DCDH), 110 to 127 (QKCY…DCTK), 128 to 145 (VKCY…NCSK), and 149 to 166 (VNCY…ECTI). At arginine 72 the chain carries Omega-N-methylarginine.

In terms of assembly, associates with the 40S ribosomal subunit, the 80S ribosome and with polysomes. In terms of processing, arginine methylation by PRMT1 in the Arg/Gly-rich region impedes RNA binding.

It localises to the nucleus. The protein localises to the cytoplasm. Its subcellular location is the endoplasmic reticulum. Functionally, single-stranded DNA-binding protein that preferentially binds to the sterol regulatory element (SRE) sequence 5'-GTGCGGTG-3', and thereby mediates transcriptional repression. Has a role as transactivator of the Myc promoter. Binds single-stranded RNA in a sequence-specific manner. Binds G-rich elements in target mRNA coding sequences. Prevents G-quadruplex structure formation in vitro, suggesting a role in supporting translation by resolving stable structures on mRNAs. The polypeptide is CCHC-type zinc finger nucleic acid binding protein (CNBP) (Bos taurus (Bovine)).